The following is a 404-amino-acid chain: uncharacterized protein (404 aa).

Belongs to the lymphocryptovirus BTRF1 family.

This is an uncharacterized protein from Homo sapiens (Human).